The primary structure comprises 270 residues: uncharacterized protein (270 aa).

The span at 1–10 (MFGLKVKDAT) shows a compositional bias: basic and acidic residues. Disordered regions lie at residues 1–115 (MFGL…PTPW) and 215–236 (QTGF…QGEQ). Composition is skewed to low complexity over residues 26–41 (SSSS…TQRG) and 98–113 (GTSP…GTPT).

The protein belongs to the adhesin P1 family.

This is an uncharacterized protein from Mycoplasma pneumoniae (strain ATCC 29342 / M129 / Subtype 1) (Mycoplasmoides pneumoniae).